Reading from the N-terminus, the 257-residue chain is Type III pantothenate kinase (257 aa).

D6–V13 is a binding site for ATP. Substrate contacts are provided by residues Y102 and G109–R112. Residue D111 is the Proton acceptor of the active site. D131 is a K(+) binding site. T134 is an ATP binding site. Residue T186 coordinates substrate.

The protein belongs to the type III pantothenate kinase family. As to quaternary structure, homodimer. Requires NH4(+) as cofactor. K(+) serves as cofactor.

It localises to the cytoplasm. It catalyses the reaction (R)-pantothenate + ATP = (R)-4'-phosphopantothenate + ADP + H(+). The protein operates within cofactor biosynthesis; coenzyme A biosynthesis; CoA from (R)-pantothenate: step 1/5. Its function is as follows. Catalyzes the phosphorylation of pantothenate (Pan), the first step in CoA biosynthesis. This chain is Type III pantothenate kinase, found in Leptospira borgpetersenii serovar Hardjo-bovis (strain JB197).